The following is a 409-amino-acid chain: MVQYLLITANVGSLFEPDARLHTSWIKTVADQVESVDPSFFVIHLQETGGKKFTECSQQVPIIINRLSTALPKFDLLRAYVDIDYEAIEYTALGALCFIKRSLWSNVSQFNFHTKKYEQLTSPKEVVTHGLENYPYVVKHKFPKDFWPSIKWGRKGYMQTRWKIENKVFDFVNAHLFHDESNLALIHENPQLYSQNRKRALDFVLAELSSKENGCTPLLFVFGDLNFRLDSRSFLNRLTERTAQHPVADQEQMGSLADGLQASAANLQVITHPSENLRRTVSAIEFRRESDSDDSQNSCVLRIEKKKFDYFNHKKLLDDWRSYRDDDKETENFQSMFEMHINFPPTYPWSEDPENSETLMKTRAPAWCDRVLMNKNAYSLVEEGEPQYRSFGMETCTGDHKPVMLTFNI.

The protein belongs to the inositol 1,4,5-trisphosphate 5-phosphatase type I family.

It catalyses the reaction 1D-myo-inositol 1,4,5-trisphosphate + H2O = 1D-myo-inositol 1,4-bisphosphate + phosphate. The enzyme catalyses 1D-myo-inositol 1,3,4,5-tetrakisphosphate + H2O = 1D-myo-inositol 1,3,4-trisphosphate + phosphate. This chain is Probable type I inositol 1,4,5-trisphosphate 5-phosphatase (ipp-5), found in Caenorhabditis elegans.